The following is a 377-amino-acid chain: DNA dC-&gt;dU-editing enzyme APOBEC-3G (377 aa).

The essential for cytoplasmic localization stretch occupies residues 1–60 (MNPQIRNMVEQMEPDIFVYYFNNRPILSGRNTVWLCYEVKTKDPSGPPLDANIFQGKLYP). CMP/dCMP-type deaminase domains follow at residues 29–138 (GRNT…LRIL) and 214–327 (GQRE…LRTL). Phosphothreonine; by PKA is present on Thr32. Positions 65, 97, and 100 each coordinate Zn(2+). Positions 209–335 (KPWVSGQRET…TLHRDGAKIA (127 aa)) are necessary for homooligomerization. Residues 213–215 (SGQ) are interaction with DNA. Residue Thr218 is modified to Phosphothreonine; by PKA and CAMK2. Residue His257 coordinates Zn(2+). The active-site Proton donor is the Glu259. The Zn(2+) site is built by Cys287 and Cys290. An interaction with DNA region spans residues 312–319 (RIYDDQGR).

Belongs to the cytidine and deoxycytidylate deaminase family. As to quaternary structure, homodimer. Homooligomer. Can bind RNA to form ribonucleoprotein complexes of high-molecular-mass (HMM) or low-molecular-mass (LMM). HMM is inactive and heterogeneous in protein composition because of binding nonselectively to cellular RNAs, which in turn are associated with variety of cellular proteins. The LMM form which is enzymatically active has few or no RNAs associated. Its ability to form homooligomer is distinct from its ability to assemble into HMM. Interacts with APOBEC3B, APOBEC3F, MOV10, AGO2, EIF4E, EIF4ENIF1, DCP2 and DDX6 in an RNA-dependent manner. Interacts with AGO1, AGO3 and PKA/PRKACA. It depends on Zn(2+) as a cofactor.

The protein resides in the cytoplasm. Its subcellular location is the nucleus. It is found in the P-body. The enzyme catalyses a 2'-deoxycytidine in single-stranded DNA + H2O + H(+) = a 2'-deoxyuridine in single-stranded DNA + NH4(+). DNA deaminase (cytidine deaminase) which acts as an inhibitor of retrovirus replication and retrotransposon mobility via deaminase-dependent and -independent mechanisms. Exhibits antiviral activity against vif-deficient: HIV-1 and simian immunodeficiency viruses (SIVs) and also simian foamy virus (SFV). After the penetration of retroviral nucleocapsids into target cells of infection and the initiation of reverse transcription, it can induce the conversion of cytosine to uracil in the minus-sense single-strand viral DNA, leading to G-to-A hypermutations in the subsequent plus-strand viral DNA. The resultant detrimental levels of mutations in the proviral genome, along with a deamination-independent mechanism that works prior to the proviral integration, together exert efficient antiretroviral effects in infected target cells. Selectively targets single-stranded DNA and does not deaminate double-stranded DNA or single- or double-stranded RNA. May inhibit the mobility of LTR retrotransposons. This is DNA dC-&gt;dU-editing enzyme APOBEC-3G (APOBEC3G) from Chlorocebus aethiops (Green monkey).